Consider the following 450-residue polypeptide: Bifunctional protein GlmU (450 aa).

The interval 1–229 is pyrophosphorylase; the sequence is MRRHAIILAA…VEEIMGVNDR (229 aa). UDP-N-acetyl-alpha-D-glucosamine contacts are provided by residues 8-11, Lys-22, Gln-72, and 77-78; these read LAAG and GT. Asp-102 serves as a coordination point for Mg(2+). UDP-N-acetyl-alpha-D-glucosamine is bound by residues Gly-139, Glu-154, and Asn-227. Asn-227 contributes to the Mg(2+) binding site. The interval 230 to 250 is linker; sequence VMLSQAEKAMQRRTNHYHMLN. Residues 251 to 450 are N-acetyltransferase; it reads GVTIIDPDST…RQTTKEGYRK (200 aa). Residues Arg-332 and Lys-350 each coordinate UDP-N-acetyl-alpha-D-glucosamine. The Proton acceptor role is filled by His-362. 2 residues coordinate UDP-N-acetyl-alpha-D-glucosamine: Tyr-365 and Asn-376. Residues 385–386, Ala-422, and Arg-439 contribute to the acetyl-CoA site; that span reads NY.

It in the N-terminal section; belongs to the N-acetylglucosamine-1-phosphate uridyltransferase family. In the C-terminal section; belongs to the transferase hexapeptide repeat family. Homotrimer. Mg(2+) is required as a cofactor.

The protein localises to the cytoplasm. The enzyme catalyses alpha-D-glucosamine 1-phosphate + acetyl-CoA = N-acetyl-alpha-D-glucosamine 1-phosphate + CoA + H(+). The catalysed reaction is N-acetyl-alpha-D-glucosamine 1-phosphate + UTP + H(+) = UDP-N-acetyl-alpha-D-glucosamine + diphosphate. Its pathway is nucleotide-sugar biosynthesis; UDP-N-acetyl-alpha-D-glucosamine biosynthesis; N-acetyl-alpha-D-glucosamine 1-phosphate from alpha-D-glucosamine 6-phosphate (route II): step 2/2. It participates in nucleotide-sugar biosynthesis; UDP-N-acetyl-alpha-D-glucosamine biosynthesis; UDP-N-acetyl-alpha-D-glucosamine from N-acetyl-alpha-D-glucosamine 1-phosphate: step 1/1. It functions in the pathway bacterial outer membrane biogenesis; LPS lipid A biosynthesis. In terms of biological role, catalyzes the last two sequential reactions in the de novo biosynthetic pathway for UDP-N-acetylglucosamine (UDP-GlcNAc). The C-terminal domain catalyzes the transfer of acetyl group from acetyl coenzyme A to glucosamine-1-phosphate (GlcN-1-P) to produce N-acetylglucosamine-1-phosphate (GlcNAc-1-P), which is converted into UDP-GlcNAc by the transfer of uridine 5-monophosphate (from uridine 5-triphosphate), a reaction catalyzed by the N-terminal domain. This is Bifunctional protein GlmU from Staphylococcus aureus (strain Mu50 / ATCC 700699).